Here is an 88-residue protein sequence, read N- to C-terminus: Platelet factor 4 (88 aa).

T7 is a glycosylation site (O-linked (GalNAc...) threonine). 2 disulfides stabilise this stretch: C25–C51 and C27–C67. S41 carries the post-translational modification Phosphoserine. 76 to 82 contributes to the heparin binding site; it reads KKILKKL.

This sequence belongs to the intercrine alpha (chemokine CxC) family. Homotetramer. Interacts with TNFAIP6 (via Link domain). Interacts with CCR1. Interacts with CXCR3. Interacts with THBD; this interaction enhances generation of activated protein C. Post-translationally, O-linked glycan consists of Gal-GalNAc disaccharide which is modified with sialic acid residues (microheterogeneity).

It localises to the secreted. In terms of biological role, chemokine released during platelet aggregation that plays a role in different biological processes including hematopoiesis, cell proliferation, differentiation, and activation. Acts via different functional receptors including CCR1, CXCR3A or CXCR3B. Upon interaction with CXCR3A receptor, induces activated T-lymphocytes migration mediated via downstream Ras/extracellular signal-regulated kinase (ERK) signaling. Neutralizes the anticoagulant effect of heparin by binding more strongly to heparin than to the chondroitin-4-sulfate chains of the carrier molecule. Plays a role in the inhibition of hematopoiesis and in the maintenance of hematopoietic stem cell (HSC) quiescence. Chemotactic for neutrophils and monocytes via CCR1. Inhibits endothelial cell proliferation. In cooperation with toll-like receptor 8/TLR8, induces chromatin remodeling and activates inflammatory gene expression via the TBK1-IRF5 axis. In addition, induces myofibroblast differentiation and collagen synthesis in different precursor cells, including endothelial cells, by stimulating endothelial-to-mesenchymal transition. Interacts with thrombomodulin/THBD to enhance the activation of protein C and thus potentiates its anticoagulant activity. The chain is Platelet factor 4 (PF4) from Bos taurus (Bovine).